Reading from the N-terminus, the 382-residue chain is MSSYRPYQSIERRKSRQIHVGKVPVGGDAPISVQTMTNTLTTDAEATIAQIRRAELAGVDIVRVSCPDEESTAALAEIVREVNVPIVADIHFHYKRAIEAAQAGAACLRINPGNIGSAERVREVVKAAREHGCSIRIGVNAGSLEKHLLEKYGEPNPDALVESALEHAKILQDHDFHEFKISVKASDVFLAVAAYQQLAEVCDHPLHIGITEAGSKRAGTVKSSIGLGNLLWAGVGDTMRVSLSADPEEEVLVGWDILKSLGLRHRGVKIISCPSCARQGFNVIQTVQTLEERLAHIQTPLTLSIIGCVVNGPGEALMTDIGVTGGGSGRHMVYAAGRQDHTVPADSMIEHIVELVEKKAEILRAEEAAAKAEAEAALAPAQ.

Positions 273, 276, 308, and 315 each coordinate [4Fe-4S] cluster.

Belongs to the IspG family. [4Fe-4S] cluster is required as a cofactor.

It carries out the reaction (2E)-4-hydroxy-3-methylbut-2-enyl diphosphate + oxidized [flavodoxin] + H2O + 2 H(+) = 2-C-methyl-D-erythritol 2,4-cyclic diphosphate + reduced [flavodoxin]. The protein operates within isoprenoid biosynthesis; isopentenyl diphosphate biosynthesis via DXP pathway; isopentenyl diphosphate from 1-deoxy-D-xylulose 5-phosphate: step 5/6. In terms of biological role, converts 2C-methyl-D-erythritol 2,4-cyclodiphosphate (ME-2,4cPP) into 1-hydroxy-2-methyl-2-(E)-butenyl 4-diphosphate. The protein is 4-hydroxy-3-methylbut-2-en-1-yl diphosphate synthase (flavodoxin) of Gluconacetobacter diazotrophicus (strain ATCC 49037 / DSM 5601 / CCUG 37298 / CIP 103539 / LMG 7603 / PAl5).